A 616-amino-acid chain; its full sequence is Electron transfer flavoprotein-ubiquinone oxidoreductase, mitochondrial (616 aa).

The N-terminal 32 residues, 1–32, are a transit peptide targeting the mitochondrion; that stretch reads MLVRLTKLSCPAYHWFHALKIKKCLPLCAPRC. 70–84 lines the FAD pocket; sequence VVIVGAGPAGLSAAI. Lys-95 is modified (N6-acetyllysine). Residues 108 to 129 lie within the membrane without spanning it; sequence IGAHTLSGACLDPAAFKELFPD. Residues Lys-131 and Lys-222 each carry the N6-acetyllysine modification. Positions 304 and 305 each coordinate a ubiquinone. N6-acetyllysine is present on residues Lys-356 and Lys-415. Residues 427–446 lie within the membrane without spanning it; sequence TGLHVTEYEDNLKQSWVWKE. A Phosphoserine modification is found at Ser-550. Positions 560, 585, 588, and 591 each coordinate [4Fe-4S] cluster. The 4Fe-4S ferredoxin-type domain occupies 576–605; sequence FRLQINAQNCVHCKTCDIKDPSQNINWVVP.

This sequence belongs to the ETF-QO/FixC family. In terms of assembly, monomer. It depends on [4Fe-4S] cluster as a cofactor. FAD serves as cofactor. Acetylation of Lys-95 and Lys-222 is observed in liver mitochondria from fasted mice but not from fed mice.

The protein localises to the mitochondrion inner membrane. It carries out the reaction a ubiquinone + reduced [electron-transfer flavoprotein] = a ubiquinol + oxidized [electron-transfer flavoprotein] + H(+). Accepts electrons from ETF and reduces ubiquinone. In Mus musculus (Mouse), this protein is Electron transfer flavoprotein-ubiquinone oxidoreductase, mitochondrial (Etfdh).